A 526-amino-acid polypeptide reads, in one-letter code: Probable fucosyltransferase 7 (526 aa).

Residues 1 to 4 lie on the Cytoplasmic side of the membrane; sequence MKTK. A helical; Signal-anchor for type II membrane protein transmembrane segment spans residues 5 to 25; it reads LMITIFSCLLLWSMLLLLSFS. Residues 26–526 lie on the Lumenal side of the membrane; the sequence is NIFKHQLLGA…KLVDDTKNEL (501 aa). N-linked (GlcNAc...) asparagine glycosylation is found at Asn-211, Asn-215, and Asn-363.

The protein belongs to the glycosyltransferase 37 family. Expressed in roots, leaves, stems and seedlings.

The protein resides in the golgi apparatus. The protein localises to the golgi stack membrane. It functions in the pathway protein modification; protein glycosylation. In terms of biological role, may be involved in cell wall biosynthesis. May act as a fucosyltransferase. The sequence is that of Probable fucosyltransferase 7 (FUT7) from Arabidopsis thaliana (Mouse-ear cress).